Reading from the N-terminus, the 416-residue chain is Homeobox protein ceh-62 (416 aa).

The segment covering 103 to 113 (TPTPIIATPSI) has biased composition (low complexity). Disordered stretches follow at residues 103–144 (TPTP…QATR) and 178–247 (FQNR…FPPT). The segment covering 118-127 (QPLQSPSAPN) has biased composition (polar residues). Positions 130–189 (SRRKRTTFSPEQATRLEAEYIGDSYMAREKRHLLAQSLKLSENQVKTWFQNRRAKDKRDR) form a DNA-binding region, homeobox. Over residues 193–218 (NASNHTSNSRRSSPSRKSSSDSTPTP) the composition is skewed to low complexity. Residues 219–240 (TQATQFDMPTQIQTASPPTTAD) are compositionally biased toward polar residues.

It is found in the nucleus. The chain is Homeobox protein ceh-62 from Caenorhabditis elegans.